Here is a 149-residue protein sequence, read N- to C-terminus: Transcriptional repressor NrdR (149 aa).

Residues 3-34 (CPFCAMEETKVIDSRLVSDGYQVRRRRECGYC) fold into a zinc finger. Residues 49–139 (PKIIKNDGSR…VYLSFDDINQ (91 aa)) enclose the ATP-cone domain.

This sequence belongs to the NrdR family. It depends on Zn(2+) as a cofactor.

Its function is as follows. Negatively regulates transcription of bacterial ribonucleotide reductase nrd genes and operons by binding to NrdR-boxes. The polypeptide is Transcriptional repressor NrdR (Histophilus somni (strain 129Pt) (Haemophilus somnus)).